A 270-amino-acid chain; its full sequence is Zinc finger protein ZAT2 (270 aa).

Polar residues-rich tracts occupy residues 1–28 and 36–48; these read MSNTSNSDPNSDIPFASSNVTLPSYNQN and LTNNEVGSSSSSP. The interval 1 to 64 is disordered; it reads MSNTSNSDPN…QPDPDASQIA (64 aa). The C2H2-type 1 zinc-finger motif lies at 65-87; it reads RPCTECGKQFGSLKALFGHMRCH. A disordered region spans residues 95–119; sequence INPPSNFKRRINSNAASSSSSWDPS. Over residues 106-115 the composition is skewed to low complexity; sequence NSNAASSSSS. 2 C2H2-type zinc fingers span residues 148-170 and 211-233; these read FECDGCKKVFGSHQALGGHRATH and HRCNICSRVFSSGQALGGHMRCH.

Interacts (via the EAR motif) with TPL. Expressed exclusively in pollen.

Its subcellular location is the nucleus. Mediates the regulation of male germ cell division by DUO1. The protein is Zinc finger protein ZAT2 of Arabidopsis thaliana (Mouse-ear cress).